The sequence spans 834 residues: 5-hydroxytryptamine receptor 2A (834 aa).

The Extracellular segment spans residues 1 to 230; sequence MAHETSFNDA…TQLLRMAVTS (230 aa). The tract at residues 56-75 is disordered; sequence TDDGQLEDTNNNNNSKRYYS. N-linked (GlcNAc...) asparagine glycans are attached at residues N68, N97, N161, N175, N183, N194, N203, and N209. The chain crosses the membrane as a helical span at residues 231-253; that stretch reads VLLGLMILVTIIGNVFVIAAIIL. Residues 254 to 263 lie on the Cytoplasmic side of the membrane; sequence ERNLQNVANY. A helical transmembrane segment spans residues 264 to 285; it reads LVASLAVADLFVACLVMPLGAV. The Extracellular portion of the chain corresponds to 286–300; the sequence is YEISQGWILGPELCD. Cysteines 299 and 378 form a disulfide. Residues 301–322 form a helical membrane-spanning segment; the sequence is IWTSCDVLCCTASILHLVAIAV. The Cytoplasmic portion of the chain corresponds to 323-341; the sequence is DRYWAVTNIDYIHSRTSNR. The helical transmembrane segment at 342-364 threads the bilayer; sequence VFMMIFCVWTAAVIVSLAPQFGW. The Extracellular segment spans residues 365–391; it reads KDPDYLQRIEQQKCMVSQDVSYQVFAT. A helical membrane pass occupies residues 392–413; that stretch reads CCTFYVPLLVILALYWKIYQTA. Residues 414–752 lie on the Cytoplasmic side of the membrane; sequence RKRIHRRRPR…AKRERKAAKT (339 aa). 5 disordered regions span residues 420 to 442, 460 to 516, 531 to 599, 617 to 640, and 674 to 743; these read RRPRPVDAAVNNNQPDGGAATDT, KTGS…STSG, QQGK…SEDQ, LEQVQQLQKSVKSGGGGGASTSNA, and STLT…TLEA. 2 stretches are compositionally biased toward polar residues: residues 482–502 and 532–542; these read GNSTNTVNTVEDTEFSSSNVD and QGKSTAKSSAA. Basic and acidic residues predominate over residues 551 to 564; that stretch reads RQEDDGQRPEHGEQ. The span at 565-575 shows a compositional bias: acidic residues; sequence EDREELEDQDE. Residues 582–593 show a composition bias toward low complexity; sequence TTATSATTAAGT. Residues 674–694 show a composition bias toward polar residues; the sequence is STLTSCNQSHPLCGTANESPS. Residues 702–723 are compositionally biased toward low complexity; sequence QPTTPQQQPHQQAHQQQQQQQQ. Residues 753–776 traverse the membrane as a helical segment; the sequence is LAIITGAFVVCWLPFFVMALTMPL. Topologically, residues 777–785 are extracellular; that stretch reads CAACQISDS. A helical membrane pass occupies residues 786–808; the sequence is VASLFLWLGYFNSTLNPVIYTIF. At 809–834 the chain is on the cytoplasmic side; sequence SPEFRQAFKRILFGGHRPVHYRSGKL.

The protein belongs to the G-protein coupled receptor 1 family.

The protein localises to the cell membrane. In terms of biological role, this is one of the several different receptors for 5-hydroxytryptamine (serotonin), a biogenic hormone that functions as a neurotransmitter, a hormone, and a mitogen. The activity of this receptor is mediated by G proteins which inhibit adenylate cyclase. This chain is 5-hydroxytryptamine receptor 2A (5-HT1A), found in Drosophila melanogaster (Fruit fly).